The primary structure comprises 223 residues: Carnitine transport permease protein OpuCD (223 aa).

One can recognise an ABC transmembrane type-1 domain in the interval 22–202 (FWRHFLMSAY…VMAILADVLL (181 aa)). 5 helical membrane passes run 27 to 47 (LMSA…GVYI), 63 to 83 (IIQT…MGLG), 87 to 107 (VVLS…YTGI), 148 to 168 (ALVI…GGLG), and 182 to 202 (AIIL…DVLL).

This sequence belongs to the binding-protein-dependent transport system permease family. In terms of assembly, the complex is composed of two ATP-binding proteins (OpuCA), two transmembrane proteins (OpuCB and OpuCD) and a solute-binding protein (OpuCC).

The protein resides in the cell membrane. Its function is as follows. Part of the ABC transporter complex OpuCABCD involved in carnitine uptake. Probably responsible for the translocation of the substrate across the membrane. Involved, with BetL and GbuABC, in osmoprotection and cryoprotection of Listeria. Can also mediate weak glycine betaine transport. This Listeria monocytogenes serotype 1/2a (strain 10403S) protein is Carnitine transport permease protein OpuCD (opuCD).